The sequence spans 269 residues: Small ribosomal subunit protein uS2 (269 aa).

The interval 224–269 is disordered; that stretch reads ANQGREDSEDVYSETENDTEETDEELVSEEDLKEFVENSEEESDEE. Positions 230 to 269 are enriched in acidic residues; sequence DSEDVYSETENDTEETDEELVSEEDLKEFVENSEEESDEE.

It belongs to the universal ribosomal protein uS2 family.

The polypeptide is Small ribosomal subunit protein uS2 (Finegoldia magna (strain ATCC 29328 / DSM 20472 / WAL 2508) (Peptostreptococcus magnus)).